Here is a 395-residue protein sequence, read N- to C-terminus: Phosphopentomutase (395 aa).

Mn(2+) contacts are provided by D12, D289, H294, D330, H331, and H342.

This sequence belongs to the phosphopentomutase family. It depends on Mn(2+) as a cofactor.

It localises to the cytoplasm. The catalysed reaction is 2-deoxy-alpha-D-ribose 1-phosphate = 2-deoxy-D-ribose 5-phosphate. It carries out the reaction alpha-D-ribose 1-phosphate = D-ribose 5-phosphate. It functions in the pathway carbohydrate degradation; 2-deoxy-D-ribose 1-phosphate degradation; D-glyceraldehyde 3-phosphate and acetaldehyde from 2-deoxy-alpha-D-ribose 1-phosphate: step 1/2. Functionally, isomerase that catalyzes the conversion of deoxy-ribose 1-phosphate (dRib-1-P) and ribose 1-phosphate (Rib-1-P) to deoxy-ribose 5-phosphate (dRib-5-P) and ribose 5-phosphate (Rib-5-P), respectively. The polypeptide is Phosphopentomutase (Levilactobacillus brevis (strain ATCC 367 / BCRC 12310 / CIP 105137 / JCM 1170 / LMG 11437 / NCIMB 947 / NCTC 947) (Lactobacillus brevis)).